The sequence spans 446 residues: tRNA-2-methylthio-N(6)-dimethylallyladenosine synthase (446 aa).

The MTTase N-terminal domain maps to 3-120 (KKLFIETHGC…LPEMIDAARS (118 aa)). Residues Cys-12, Cys-49, Cys-83, Cys-157, Cys-161, and Cys-164 each coordinate [4Fe-4S] cluster. The Radical SAM core domain occupies 143–375 (RVDGPTAFVS…QGRIHQQGYE (233 aa)). In terms of domain architecture, TRAM spans 378 to 442 (RRMVGSTQRI…PHSLRGTLIE (65 aa)).

Belongs to the methylthiotransferase family. MiaB subfamily. Monomer. It depends on [4Fe-4S] cluster as a cofactor.

The protein resides in the cytoplasm. It carries out the reaction N(6)-dimethylallyladenosine(37) in tRNA + (sulfur carrier)-SH + AH2 + 2 S-adenosyl-L-methionine = 2-methylsulfanyl-N(6)-dimethylallyladenosine(37) in tRNA + (sulfur carrier)-H + 5'-deoxyadenosine + L-methionine + A + S-adenosyl-L-homocysteine + 2 H(+). Functionally, catalyzes the methylthiolation of N6-(dimethylallyl)adenosine (i(6)A), leading to the formation of 2-methylthio-N6-(dimethylallyl)adenosine (ms(2)i(6)A) at position 37 in tRNAs that read codons beginning with uridine. This chain is tRNA-2-methylthio-N(6)-dimethylallyladenosine synthase, found in Pseudomonas paraeruginosa (strain DSM 24068 / PA7) (Pseudomonas aeruginosa (strain PA7)).